We begin with the raw amino-acid sequence, 446 residues long: Exodeoxyribonuclease 7 large subunit (446 aa).

This sequence belongs to the XseA family. In terms of assembly, heterooligomer composed of large and small subunits.

It is found in the cytoplasm. It catalyses the reaction Exonucleolytic cleavage in either 5'- to 3'- or 3'- to 5'-direction to yield nucleoside 5'-phosphates.. Functionally, bidirectionally degrades single-stranded DNA into large acid-insoluble oligonucleotides, which are then degraded further into small acid-soluble oligonucleotides. The chain is Exodeoxyribonuclease 7 large subunit from Streptococcus pneumoniae (strain ATCC BAA-255 / R6).